Here is a 267-residue protein sequence, read N- to C-terminus: Hydroxyethylthiazole kinase 2 (267 aa).

M41 contacts substrate. 2 residues coordinate ATP: K116 and T166. Substrate is bound at residue G193.

The protein belongs to the Thz kinase family. Requires Mg(2+) as cofactor.

The catalysed reaction is 5-(2-hydroxyethyl)-4-methylthiazole + ATP = 4-methyl-5-(2-phosphooxyethyl)-thiazole + ADP + H(+). It participates in cofactor biosynthesis; thiamine diphosphate biosynthesis; 4-methyl-5-(2-phosphoethyl)-thiazole from 5-(2-hydroxyethyl)-4-methylthiazole: step 1/1. Catalyzes the phosphorylation of the hydroxyl group of 4-methyl-5-beta-hydroxyethylthiazole (THZ). The sequence is that of Hydroxyethylthiazole kinase 2 from Streptococcus pneumoniae (strain JJA).